Consider the following 560-residue polypeptide: Radial spoke head protein 3 homolog (560 aa).

Disordered regions lie at residues 134-186 (RKRG…EEPM) and 225-249 (ARKR…PVEG). Positions 153–162 (RAPSTYTYTS) are enriched in polar residues. Residues 215–239 (DSLELQRQREARKRALARKQAQEQL) adopt a coiled-coil conformation. Residue threonine 286 is modified to Phosphothreonine; by MAPK1. Residues 331-385 (LEVMEEEELANLRASQREYEELRNSERAEVQRLEEQERRHREEKERRKKQQWEIM) adopt a coiled-coil conformation. 3 disordered regions span residues 354–375 (NSER…EEKE), 473–498 (HGED…ESLE), and 526–560 (DRRS…EELS).

The protein belongs to the flagellar radial spoke RSP3 family. As to quaternary structure, component of the axonemal radial spoke 1 (RS1) and 2 (RS2) complexes, at least composed of spoke head proteins RSPH1, RSPH3, RSPH9 and the cilia-specific component RSPH4A or sperm-specific component RSPH6A, spoke stalk proteins RSPH14, DNAJB13, DYDC1, ROPN1L and NME5, and the RS1 complex-specific anchor protein IQUB. Interacts with IQUB. Interacts with phosphorylated MAPK1. Interacts with MEK1. Interacts with PKA regulatory subunits PRKAR1A and PRKAR1B. Interacts with RSPH1. Interacts with RSPH4A. Interacts with RSPH6A. Interacts with RSPH9. Interacts with LRRC23.

It localises to the cytoplasm. It is found in the cytoskeleton. The protein localises to the cilium axoneme. The protein resides in the flagellum axoneme. Functions as part of axonemal radial spoke complexes that play an important part in the motility of sperm and cilia. Functions as a protein kinase A-anchoring protein that scaffolds the cAMP-dependent protein kinase holoenzyme. May serve as a point of convergence for MAPK and PKA signaling in cilia. The chain is Radial spoke head protein 3 homolog (RSPH3) from Homo sapiens (Human).